Consider the following 339-residue polypeptide: Tetraacyldisaccharide 4'-kinase (339 aa).

An ATP-binding site is contributed by 62-69 (VAGGTGKT).

The protein belongs to the LpxK family.

The catalysed reaction is a lipid A disaccharide + ATP = a lipid IVA + ADP + H(+). It participates in glycolipid biosynthesis; lipid IV(A) biosynthesis; lipid IV(A) from (3R)-3-hydroxytetradecanoyl-[acyl-carrier-protein] and UDP-N-acetyl-alpha-D-glucosamine: step 6/6. Its function is as follows. Transfers the gamma-phosphate of ATP to the 4'-position of a tetraacyldisaccharide 1-phosphate intermediate (termed DS-1-P) to form tetraacyldisaccharide 1,4'-bis-phosphate (lipid IVA). The polypeptide is Tetraacyldisaccharide 4'-kinase (Xylella fastidiosa (strain M23)).